Reading from the N-terminus, the 94-residue chain is Small ribosomal subunit protein bS6 (94 aa).

It belongs to the bacterial ribosomal protein bS6 family.

Its function is as follows. Binds together with bS18 to 16S ribosomal RNA. This Fusobacterium nucleatum subsp. nucleatum (strain ATCC 25586 / DSM 15643 / BCRC 10681 / CIP 101130 / JCM 8532 / KCTC 2640 / LMG 13131 / VPI 4355) protein is Small ribosomal subunit protein bS6.